Consider the following 60-residue polypeptide: Large ribosomal subunit protein uL30 (60 aa).

It belongs to the universal ribosomal protein uL30 family. Part of the 50S ribosomal subunit.

This Acidothermus cellulolyticus (strain ATCC 43068 / DSM 8971 / 11B) protein is Large ribosomal subunit protein uL30.